Reading from the N-terminus, the 427-residue chain is Gamma-glutamyl phosphate reductase (427 aa).

This sequence belongs to the gamma-glutamyl phosphate reductase family.

Its subcellular location is the cytoplasm. The enzyme catalyses L-glutamate 5-semialdehyde + phosphate + NADP(+) = L-glutamyl 5-phosphate + NADPH + H(+). The protein operates within amino-acid biosynthesis; L-proline biosynthesis; L-glutamate 5-semialdehyde from L-glutamate: step 2/2. Catalyzes the NADPH-dependent reduction of L-glutamate 5-phosphate into L-glutamate 5-semialdehyde and phosphate. The product spontaneously undergoes cyclization to form 1-pyrroline-5-carboxylate. The polypeptide is Gamma-glutamyl phosphate reductase (Anaeromyxobacter dehalogenans (strain 2CP-1 / ATCC BAA-258)).